The chain runs to 388 residues: GTPase Obg (388 aa).

The region spanning 1–159 (MKFVDEANIR…RSIKLELLLL (159 aa)) is the Obg domain. The region spanning 160-333 (ADVGLLGMPN…LSIKMLDYIR (174 aa)) is the OBG-type G domain. Residues 166 to 173 (GMPNAGKS), 191 to 195 (FTTLV), 213 to 216 (DIPG), 283 to 286 (NKTD), and 314 to 316 (SAY) each bind GTP. 2 residues coordinate Mg(2+): serine 173 and threonine 193.

This sequence belongs to the TRAFAC class OBG-HflX-like GTPase superfamily. OBG GTPase family. In terms of assembly, monomer. Mg(2+) is required as a cofactor.

It localises to the cytoplasm. An essential GTPase which binds GTP, GDP and possibly (p)ppGpp with moderate affinity, with high nucleotide exchange rates and a fairly low GTP hydrolysis rate. Plays a role in control of the cell cycle, stress response, ribosome biogenesis and in those bacteria that undergo differentiation, in morphogenesis control. The chain is GTPase Obg from Shewanella frigidimarina (strain NCIMB 400).